Reading from the N-terminus, the 575-residue chain is MLTDPSQKYRAIAPVDLPDRRWPSRTLRQAPTWLSTDLRDGNQALFEPMNRERKLRLFHELVRIGFKEIEVGFPAASRIDFETVRHLIDEHLIPDDVTPMVMTQLRADLITETVKSVAGARRVIVHFYNAIAPAWREIVFGMSVPQIITLVEDHIALFRRLTAVHPETEWILQYSPETFCMAELEVSLEVCNAAIRAWDAGPRRRMIINLPTTVEVSTPNVFADQIEWMDRRLERREHLILSVHPHNDRGTAVACAEQAMLAGAQRVEGCLFGNGERSGNVDVVTLALNLYTQGIAPGLDFSDIAALARVAEECTALPIHPRHPYVGDLVFTAFSGSHQDAIAKGFAAQRPDAPWRVPYLPIDPTDLGRTYDSIVRVNSQSGKGGIAFLLQRDHHITMPRRMQVEFSAIVQALADASETELTSEHLWDVFERTYLAPVQASPDFSDRTSLAPALEQRRFIYRSHCLHPHPDGERIVLELADTEGNVRTVEGSGNGPIAATVAALGLALRIDSYEERSLGVGVGADAQALAIVEAALPTVPGSRFGVGRHENITTASIMAVLSAASRFAGEEQGKG.

In terms of domain architecture, Pyruvate carboxyltransferase spans 31–305; that stretch reads PTWLSTDLRD…APGLDFSDIA (275 aa). Asp40, His244, His246, and Asn280 together coordinate Mg(2+). A regulatory domain region spans residues 437–575; it reads PVQASPDFSD…RFAGEEQGKG (139 aa).

This sequence belongs to the alpha-IPM synthase/homocitrate synthase family. LeuA type 2 subfamily. In terms of assembly, homodimer. It depends on Mg(2+) as a cofactor.

Its subcellular location is the cytoplasm. It catalyses the reaction 3-methyl-2-oxobutanoate + acetyl-CoA + H2O = (2S)-2-isopropylmalate + CoA + H(+). It functions in the pathway amino-acid biosynthesis; L-leucine biosynthesis; L-leucine from 3-methyl-2-oxobutanoate: step 1/4. Functionally, catalyzes the condensation of the acetyl group of acetyl-CoA with 3-methyl-2-oxobutanoate (2-ketoisovalerate) to form 3-carboxy-3-hydroxy-4-methylpentanoate (2-isopropylmalate). The chain is 2-isopropylmalate synthase from Herbaspirillum seropedicae (strain SmR1).